The following is a 196-amino-acid chain: Probable peptidyl-prolyl cis-trans isomerase (196 aa).

The signal sequence occupies residues 1 to 26 (MSFIRSALAAAAFVALSIGAVQTASA). A PPIase cyclophilin-type domain is found at 29 to 194 (PENTVILKLK…KIIKATIEAD (166 aa)).

This sequence belongs to the cyclophilin-type PPIase family.

It is found in the periplasm. The catalysed reaction is [protein]-peptidylproline (omega=180) = [protein]-peptidylproline (omega=0). Functionally, PPIases accelerate the folding of proteins. It catalyzes the cis-trans isomerization of proline imidic peptide bonds in oligopeptides. In Brucella melitensis biotype 1 (strain ATCC 23456 / CCUG 17765 / NCTC 10094 / 16M), this protein is Probable peptidyl-prolyl cis-trans isomerase (ppi).